A 302-amino-acid chain; its full sequence is Phosphatidylglycerol--prolipoprotein diacylglyceryl transferase (302 aa).

7 helical membrane passes run 19 to 39 (FGPL…LLGW), 67 to 87 (LVLW…FVFY), 108 to 128 (IWEG…AIIL), 143 to 163 (LIAP…FING), 203 to 223 (QLYE…FAIY), 232 to 252 (GALV…LENV), and 264 to 284 (LGLT…GWLL). Arg156 provides a ligand contact to a 1,2-diacyl-sn-glycero-3-phospho-(1'-sn-glycerol).

This sequence belongs to the Lgt family.

It localises to the cell inner membrane. It carries out the reaction L-cysteinyl-[prolipoprotein] + a 1,2-diacyl-sn-glycero-3-phospho-(1'-sn-glycerol) = an S-1,2-diacyl-sn-glyceryl-L-cysteinyl-[prolipoprotein] + sn-glycerol 1-phosphate + H(+). It participates in protein modification; lipoprotein biosynthesis (diacylglyceryl transfer). Catalyzes the transfer of the diacylglyceryl group from phosphatidylglycerol to the sulfhydryl group of the N-terminal cysteine of a prolipoprotein, the first step in the formation of mature lipoproteins. This chain is Phosphatidylglycerol--prolipoprotein diacylglyceryl transferase, found in Caulobacter vibrioides (strain ATCC 19089 / CIP 103742 / CB 15) (Caulobacter crescentus).